A 238-amino-acid polypeptide reads, in one-letter code: D-aminoacyl-tRNA deacylase (238 aa).

It belongs to the DtdA deacylase family. Monomer. Requires Zn(2+) as cofactor.

The catalysed reaction is a D-aminoacyl-tRNA + H2O = a tRNA + a D-alpha-amino acid + H(+). It catalyses the reaction glycyl-tRNA(Ala) + H2O = tRNA(Ala) + glycine + H(+). It carries out the reaction D-tyrosyl-tRNA(Tyr) + H2O = D-tyrosine + tRNA(Tyr). Its function is as follows. D-aminoacyl-tRNA deacylase with broad substrate specificity. By recycling D-aminoacyl-tRNA to D-amino acids and free tRNA molecules, this enzyme counteracts the toxicity associated with the formation of D-aminoacyl-tRNA entities in vivo. Catalyzes the hydrolysis of D-tyrosyl-tRNA(Tyr). The sequence is that of D-aminoacyl-tRNA deacylase from Saccharolobus solfataricus (strain ATCC 35092 / DSM 1617 / JCM 11322 / P2) (Sulfolobus solfataricus).